The primary structure comprises 865 residues: Chitin synthase 3 (865 aa).

The disordered stretch occupies residues 1-59; the sequence is MASQYPGHQLDDIPSTNVYRPPPRHEDDEAEHALLHQNSAYQSQYDDPHSRPLTPGQES. Residues 23–34 are compositionally biased toward basic and acidic residues; the sequence is PRHEDDEAEHAL. The segment covering 36–45 has biased composition (polar residues); it reads HQNSAYQSQY. 3 N-linked (GlcNAc...) asparagine glycosylation sites follow: N64, N95, and N538. The next 3 helical transmembrane spans lie at 565–585, 620–640, and 650–670; these read FFLH…WFSL, IINT…FILA, and VAYI…IVLS. N682 carries an N-linked (GlcNAc...) asparagine glycan. Transmembrane regions (helical) follow at residues 707-727, 735-755, and 837-857; these read IVII…FLYM, SFAQ…IYAF, and LVAT…SDSL.

The protein belongs to the chitin synthase family. Class III subfamily.

The protein resides in the cell membrane. The catalysed reaction is [(1-&gt;4)-N-acetyl-beta-D-glucosaminyl](n) + UDP-N-acetyl-alpha-D-glucosamine = [(1-&gt;4)-N-acetyl-beta-D-glucosaminyl](n+1) + UDP + H(+). Its function is as follows. Polymerizes chitin, a structural polymer of the cell wall and septum, by transferring the sugar moiety of UDP-GlcNAc to the non-reducing end of the growing chitin polymer. Is not only stable at different pH, but is also able to tolerate a broad temperature range. With CHS2, plays an important role in virulence. In Exophiala dermatitidis (strain ATCC 34100 / CBS 525.76 / NIH/UT8656) (Black yeast), this protein is Chitin synthase 3.